Reading from the N-terminus, the 122-residue chain is Ribonuclease P protein component (122 aa).

It belongs to the RnpA family. In terms of assembly, consists of a catalytic RNA component (M1 or rnpB) and a protein subunit.

The catalysed reaction is Endonucleolytic cleavage of RNA, removing 5'-extranucleotides from tRNA precursor.. RNaseP catalyzes the removal of the 5'-leader sequence from pre-tRNA to produce the mature 5'-terminus. It can also cleave other RNA substrates such as 4.5S RNA. The protein component plays an auxiliary but essential role in vivo by binding to the 5'-leader sequence and broadening the substrate specificity of the ribozyme. This Halorhodospira halophila (strain DSM 244 / SL1) (Ectothiorhodospira halophila (strain DSM 244 / SL1)) protein is Ribonuclease P protein component.